Here is a 418-residue protein sequence, read N- to C-terminus: Acetylornithine aminotransferase (418 aa).

Pyridoxal 5'-phosphate contacts are provided by residues 116 to 117 (GA) and F149. Position 152 (R152) interacts with N(2)-acetyl-L-ornithine. Residue 240–243 (DEVQ) coordinates pyridoxal 5'-phosphate. K269 carries the N6-(pyridoxal phosphate)lysine modification. S296 contributes to the N(2)-acetyl-L-ornithine binding site. Residue T297 coordinates pyridoxal 5'-phosphate.

The protein belongs to the class-III pyridoxal-phosphate-dependent aminotransferase family. ArgD subfamily. In terms of assembly, homodimer. The cofactor is pyridoxal 5'-phosphate.

It is found in the cytoplasm. The enzyme catalyses N(2)-acetyl-L-ornithine + 2-oxoglutarate = N-acetyl-L-glutamate 5-semialdehyde + L-glutamate. Its pathway is amino-acid biosynthesis; L-arginine biosynthesis; N(2)-acetyl-L-ornithine from L-glutamate: step 4/4. This Prochlorococcus marinus (strain MIT 9313) protein is Acetylornithine aminotransferase.